A 115-amino-acid chain; its full sequence is Peptidyl-tRNA hydrolase (115 aa).

Belongs to the PTH2 family.

Its subcellular location is the cytoplasm. The enzyme catalyses an N-acyl-L-alpha-aminoacyl-tRNA + H2O = an N-acyl-L-amino acid + a tRNA + H(+). Its function is as follows. The natural substrate for this enzyme may be peptidyl-tRNAs which drop off the ribosome during protein synthesis. This Methanosarcina acetivorans (strain ATCC 35395 / DSM 2834 / JCM 12185 / C2A) protein is Peptidyl-tRNA hydrolase.